The primary structure comprises 185 residues: Elongation factor P (185 aa).

Belongs to the elongation factor P family.

Its subcellular location is the cytoplasm. The protein operates within protein biosynthesis; polypeptide chain elongation. In terms of biological role, involved in peptide bond synthesis. Stimulates efficient translation and peptide-bond synthesis on native or reconstituted 70S ribosomes in vitro. Probably functions indirectly by altering the affinity of the ribosome for aminoacyl-tRNA, thus increasing their reactivity as acceptors for peptidyl transferase. The sequence is that of Elongation factor P (efp) from Nostoc sp. (strain PCC 7120 / SAG 25.82 / UTEX 2576).